A 473-amino-acid polypeptide reads, in one-letter code: Photosystem II CP43 reaction center protein (473 aa).

Residues Met-1–Glu-14 constitute a propeptide that is removed on maturation. Thr-15 carries the N-acetylthreonine modification. Position 15 is a phosphothreonine (Thr-15). The next 5 membrane-spanning stretches (helical) occupy residues Leu-69–Ala-93, Leu-134–Asn-155, Lys-178–Thr-200, Lys-255–Ser-275, and Trp-291–Ala-312. Glu-367 serves as a coordination point for [CaMn4O5] cluster. A helical membrane pass occupies residues Arg-447–Pro-471.

It belongs to the PsbB/PsbC family. PsbC subfamily. As to quaternary structure, PSII is composed of 1 copy each of membrane proteins PsbA, PsbB, PsbC, PsbD, PsbE, PsbF, PsbH, PsbI, PsbJ, PsbK, PsbL, PsbM, PsbT, PsbX, PsbY, PsbZ, Psb30/Ycf12, at least 3 peripheral proteins of the oxygen-evolving complex and a large number of cofactors. It forms dimeric complexes. It depends on Binds multiple chlorophylls and provides some of the ligands for the Ca-4Mn-5O cluster of the oxygen-evolving complex. It may also provide a ligand for a Cl- that is required for oxygen evolution. PSII binds additional chlorophylls, carotenoids and specific lipids. as a cofactor.

It is found in the plastid. It localises to the chloroplast thylakoid membrane. In terms of biological role, one of the components of the core complex of photosystem II (PSII). It binds chlorophyll and helps catalyze the primary light-induced photochemical processes of PSII. PSII is a light-driven water:plastoquinone oxidoreductase, using light energy to abstract electrons from H(2)O, generating O(2) and a proton gradient subsequently used for ATP formation. This chain is Photosystem II CP43 reaction center protein, found in Calycanthus floridus var. glaucus (Eastern sweetshrub).